Reading from the N-terminus, the 286-residue chain is ATP synthase gamma chain (286 aa).

It belongs to the ATPase gamma chain family. F-type ATPases have 2 components, CF(1) - the catalytic core - and CF(0) - the membrane proton channel. CF(1) has five subunits: alpha(3), beta(3), gamma(1), delta(1), epsilon(1). CF(0) has three main subunits: a, b and c.

It is found in the cell inner membrane. In terms of biological role, produces ATP from ADP in the presence of a proton gradient across the membrane. The gamma chain is believed to be important in regulating ATPase activity and the flow of protons through the CF(0) complex. In Christiangramia forsetii (strain DSM 17595 / CGMCC 1.15422 / KT0803) (Gramella forsetii), this protein is ATP synthase gamma chain.